The primary structure comprises 325 residues: Tetraacyldisaccharide 4'-kinase (325 aa).

54-61 contributes to the ATP binding site; it reads SVGGTGKT.

It belongs to the LpxK family.

The enzyme catalyses a lipid A disaccharide + ATP = a lipid IVA + ADP + H(+). It participates in glycolipid biosynthesis; lipid IV(A) biosynthesis; lipid IV(A) from (3R)-3-hydroxytetradecanoyl-[acyl-carrier-protein] and UDP-N-acetyl-alpha-D-glucosamine: step 6/6. Functionally, transfers the gamma-phosphate of ATP to the 4'-position of a tetraacyldisaccharide 1-phosphate intermediate (termed DS-1-P) to form tetraacyldisaccharide 1,4'-bis-phosphate (lipid IVA). The chain is Tetraacyldisaccharide 4'-kinase from Rickettsia akari (strain Hartford).